We begin with the raw amino-acid sequence, 760 residues long: Endoplasmin homolog (760 aa).

A signal peptide spans 1–23 (MRFLLVGFVALLAVSAFIPNVYA). Positions 95, 137, 150, and 187 each coordinate ATP. N95 is a glycosylation site (N-linked (GlcNAc...) asparagine). N423 carries an N-linked (GlcNAc...) asparagine glycan. Residues 727 to 760 (SQDAQVETEQHIEEAEPEPEAAEETTIEEEHSEL) are disordered. The span at 741–760 (AEPEPEAAEETTIEEEHSEL) shows a compositional bias: acidic residues. The Prevents secretion from ER signature appears at 757-760 (HSEL).

The protein belongs to the heat shock protein 90 family.

The protein resides in the endoplasmic reticulum lumen. In terms of biological role, molecular chaperone that functions in the processing and transport of secreted proteins. The protein is Endoplasmin homolog of Caenorhabditis elegans.